A 693-amino-acid polypeptide reads, in one-letter code: Cleavage and polyadenylation specificity factor subunit 3-I (693 aa).

The HXHXDH motif motif lies at 81–86 (HFHIDH).

This sequence belongs to the metallo-beta-lactamase superfamily. RNA-metabolizing metallo-beta-lactamase-like family. INTS11 subfamily. As to quaternary structure, component of the CPSF complex, at least composed of CPSF160, CPSF100, CPSF73-I, CPSF73-II, CPSF30, FY and FIPS5. Interacts with CLPS3, CPSF100, CPSF160 and FY. In terms of tissue distribution, highly expressed in carpels. Also detected in seedlings, roots, stems, leaves, flowers and siliques.

Its subcellular location is the nucleus. Functionally, component of the cleavage and polyadenylation specificity factor (CPSF) complex that play a key role in pre-mRNA 3'-end formation, recognizing the AAUAAA signal sequence and interacting with poly(A) polymerase and other factors to bring about cleavage and poly(A) addition. May function as mRNA 3'-end-processing endonuclease and also be involved in the histone 3'-end pre-mRNA processing. In Arabidopsis thaliana (Mouse-ear cress), this protein is Cleavage and polyadenylation specificity factor subunit 3-I (CPSF73-I).